The sequence spans 833 residues: Leucine--tRNA ligase (833 aa).

A 'HIGH' region motif is present at residues 41–52 (PYPSGAGLHVGH). The 'KMSKS' region motif lies at 610 to 614 (KMSKS). Position 613 (Lys-613) interacts with ATP.

This sequence belongs to the class-I aminoacyl-tRNA synthetase family.

The protein resides in the cytoplasm. The enzyme catalyses tRNA(Leu) + L-leucine + ATP = L-leucyl-tRNA(Leu) + AMP + diphosphate. In Streptococcus uberis (strain ATCC BAA-854 / 0140J), this protein is Leucine--tRNA ligase.